Here is a 175-residue protein sequence, read N- to C-terminus: Translation initiation factor IF-3 (175 aa).

This sequence belongs to the IF-3 family. As to quaternary structure, monomer.

Its subcellular location is the cytoplasm. Functionally, IF-3 binds to the 30S ribosomal subunit and shifts the equilibrium between 70S ribosomes and their 50S and 30S subunits in favor of the free subunits, thus enhancing the availability of 30S subunits on which protein synthesis initiation begins. The protein is Translation initiation factor IF-3 of Staphylococcus epidermidis (strain ATCC 35984 / DSM 28319 / BCRC 17069 / CCUG 31568 / BM 3577 / RP62A).